The primary structure comprises 238 residues: MGRKWANIVAKKTAKDGATSKVYAKFGVEIYVAAKQGDPDPESNSALKFVIDRAKQAQVPKHVIDKAIDKAKGNTDETFVEGRYEGFGPNGSMIIVDTLTSNVNRTAANVRTAYGKNGGNMGASGSVSYMFDKKGVIVFEGDDADTVFEQLLEADVEVDDVEAEDGAITVYTAPTDLHKGIQALRDNGIETFKVTELEMIPQSEVTLEGDDLATFEKLVDALEADDDVQKVYHNVADF.

Belongs to the TACO1 family. YeeN subfamily.

It is found in the cytoplasm. The polypeptide is Probable transcriptional regulatory protein SUB0364 (Streptococcus uberis (strain ATCC BAA-854 / 0140J)).